The chain runs to 526 residues: Peptide chain release factor 3 (526 aa).

One can recognise a tr-type G domain in the interval 9 to 277 (DKRRTFAIIS…GIVEWAPKPL (269 aa)). GTP contacts are provided by residues 18–25 (SHPDAGKT), 86–90 (DTPGH), and 140–143 (NKLD).

It belongs to the TRAFAC class translation factor GTPase superfamily. Classic translation factor GTPase family. PrfC subfamily.

The protein localises to the cytoplasm. Increases the formation of ribosomal termination complexes and stimulates activities of RF-1 and RF-2. It binds guanine nucleotides and has strong preference for UGA stop codons. It may interact directly with the ribosome. The stimulation of RF-1 and RF-2 is significantly reduced by GTP and GDP, but not by GMP. The chain is Peptide chain release factor 3 from Shewanella baltica (strain OS223).